A 464-amino-acid polypeptide reads, in one-letter code: tRNA modification GTPase MnmE (464 aa).

Residues R27, E89, and R128 each contribute to the (6S)-5-formyl-5,6,7,8-tetrahydrofolate site. The 160-residue stretch at 225–384 (GLATAIVGRP…LEETIAHLFF (160 aa)) folds into the TrmE-type G domain. N235 lines the K(+) pocket. Residues 235 to 240 (NVGKSS), 254 to 260 (TDVAGTT), and 279 to 282 (DTAG) each bind GTP. S239 is a binding site for Mg(2+). Positions 254, 256, and 259 each coordinate K(+). T260 lines the Mg(2+) pocket. K464 provides a ligand contact to (6S)-5-formyl-5,6,7,8-tetrahydrofolate.

This sequence belongs to the TRAFAC class TrmE-Era-EngA-EngB-Septin-like GTPase superfamily. TrmE GTPase family. As to quaternary structure, homodimer. Heterotetramer of two MnmE and two MnmG subunits. The cofactor is K(+).

Its subcellular location is the cytoplasm. Its function is as follows. Exhibits a very high intrinsic GTPase hydrolysis rate. Involved in the addition of a carboxymethylaminomethyl (cmnm) group at the wobble position (U34) of certain tRNAs, forming tRNA-cmnm(5)s(2)U34. The chain is tRNA modification GTPase MnmE from Levilactobacillus brevis (strain ATCC 367 / BCRC 12310 / CIP 105137 / JCM 1170 / LMG 11437 / NCIMB 947 / NCTC 947) (Lactobacillus brevis).